A 122-amino-acid polypeptide reads, in one-letter code: Large ribosomal subunit protein uL14 (122 aa).

As to quaternary structure, forms a cluster with proteins L3 and L19. In the 70S ribosome, L14 and L19 interact and together make contacts with the 16S rRNA in bridges B5 and B8. Part of the 50S ribosomal subunit.

Functionally, binds to 23S rRNA. Forms part of two intersubunit bridges in the 70S ribosome. In Rhodopseudomonas palustris (strain ATCC BAA-98 / CGA009), this protein is Large ribosomal subunit protein uL14.